We begin with the raw amino-acid sequence, 2698 residues long: MKMKIQKKEKQLSKLRALNHSPMSDASVNFDYKSPSPFDCSPDQGENIEEAANHCLPQKDFYTTEEEADTLFSRKLMSHNGMEDNGGRGTGVKKKRKKKEPGEQEGTKASKDREPKPKRKREPKEPKEPRRAKEPKRAKEPKEAKQKDGVKKPRKPREASGTKEGKEKRSCTDCGPRTKPKKASKDQGPTPVERKKKGKRKNETTVESLELDQSLPNPSLQSPEEPSESADSQKRRSGRQVKRRKYNEDLDFKVVDDDGETIAVLGAGRTSALSASTLAWQAEEPPEDDANIIEKILASKTVQEVHPGEPPFDLELFYVKYRNFSYLHCKWATMEELEKDPRIAQKIKRFRNKQAQMKHIFTEPDEDLFNPDYIEIDRILEVAHTKDAETGEEVTHYLVKWCSLPYEESTWELEEDVDPAKVKEFESLQILPEVKPVERPASDAWQKLETSREYKNSNRLREYQLEGMNWLLFNWYNRKNCILADEMGLGKTIQSIAFLSEIFVRGIHGPFLIIAPLSTITNWEREFRTWTEMNAIVYHGSQISRQMIQQYEMVYRDAQGNPLSGVFKFHVVITTFEMILADCPELKKIHWSCVVIDEAHRLKNRNCKLLEGLKLMALEHKVLLTGTPLQNSVEELFSLLNFLEPSQFPSETAFLEEFGDLKTEEQVKKLQSILKPMMLRRLKDDVEKNLAPKQETIIEVELTNIQKKYYRAILEKNFSFLTKGANQHNMPNLINTMMELRKCCNHPYLINGAEEKILEDFRKAHSSEASDFQLQAMIQAAGKLVLIDKLLPKLIAGGHKVLIFSQMVRCLDILEDYLIQRRYTYERIDGRVRGNLRQAAIDRFCKPDSDRFVFLLCTRAGGLGINLTAADTCIIFDSDWNPQNDLQAQARCHRIGQSKAVKVYRLITRNSYEREMFDKASLKLGLDKAILQDINRKGSTNGVQQLSKMEVEDLLRKGAYGALMDEEDEGSKFCEEDIDQILQRRTHTITIQSEGKGSTFAKASFVASGNRTDISLDDPNFWQKWAKIAELDTEANNEKESLVIDRPRVRKQTKHYNSFEEDELMEFSELDSDSDERPTRSRRLSDKARRYLRAECFRVEKNLLTFGWGRWKDILTHGRFKWPLNEKDMEVICRALLVYCVKHYKGDEKIKSFIWELITPSKDGQVQTLQNHSGLSAPVPRGRKGKKTKNQLLLPELKTADWLATCNPEVVLHDDGYKKHLKQHCNKVLLRVRMLYYLKAEILGEAADKAFEGTPARELDVLLPDIDYVEIPVDWWDAEADKSLLIGVFKHGYERYNAMRADPALCFLEKVGMPDEKSLSAEQGVTDGTSDIPERGNIDKEDSAEDKVDGLQKQTASPSDGSDGIFGEKKDDSQAVSSALTARLRRLVTIYQRCNRKELCRPEILGPGNQGYWVQEEVFRRTSDMDLINKEAQKRWTRREQADFYRTVSSFGVVYDQEKEAFDWTQFRAISRLDKKSDENLEHYFHSFVAMCRNVCRLPTWKDDGPPDASIYVEPITEERAAKTLYRIELLRKVREQVLTCPQLHERLQLCRPSLYLPVWWECGKHDRDLLIGTAKHGLNRTDYYIMNDPQLSFLDAYRNYAQHKRTDTQAPGSLCCLYQGNSKLYESLTYTPMSRTSESLESEPENLVKMDSRDDHLCLPEAGLPDITCENFVSKVQEVISLDHDESLLPESLENMMYGKTGLSQEPRSFQEAPSTNMQSRKKTVTVSASRDESCQLPGIEAEITSASSLMSSLEAGVAKMNIKNGKHLLVSISEEGEPCCSETGRSPESRGRLEARCLASPTLDTGHESGFVDLCSLSVYDSKRNFSSDQQLIDLLENKSLENKLILNQSDEEEEENEKETLAIVASTTEKPAVLDFTQPTASIPRGKNLSFHQDEAKKGRLEVGSKTPGPQRAFPPSANQCHCKHIERWAHGLGSEESEGEKPKAYEPDPYRSKANNTTVEGEPAIIPTEPFKLKHELLKEPWKESSEGGKSFSMYVPEGSEPKSEEMDFENKDDYEKDGACHSQDYPGKYSEEESKSSASGIAGDLGEEAQEVRAPTIAQLLQEKTLYSFSEWPKDRVIINRLDNICHVVLKGKWPCSHQYEPSGALPTPVLSSSAGSRSSLSEPEATEHSFSNGAALAAQIQKESFLAPVFTKDEQKHRRPYEFEVERDAKARSLEEYSASHGRPPIVLNGWHGESAIDLSCSSEGSPGATSPFPVSASTPKIGAISSLQGALGMDLSGILQAGLIHPVTGQIVNGSLRRDDAAMRRRRGRRKHIEGGMDLIFLKEQTLQAGILEVHEDAGQTTLNTTHPEGPGAASSASEPTAAASSQAEKAVPSKSLLDWLRQQADYSLDVPGFGASFSDKPKQRRPRCKEPGKLDIGSLGGEERVSAVPKEPGLRGFLPESKFNHTLAEPVLRDAGPRRRGRRPRNELLKAPAIVADSPSGMGPLFMNGLIAGMDLVGLQNVRNIPGIPLTGLVGFPAGFATMPTGEDVKNTLSMLPMMLPGMATVPQMFGVGGLLNTPMATTCTTTASASLASTKSGASATEKTTEDELSGRDVKADSLVEDKPGPSPFSDQSEPTITTSSPVAFNPFLIPGVSPGLIYPSMFLSPGMGMALPAMQQGRHSEMAGLETQKRKKKKTKGDNPTPEPASVCEREPGSDQNCTESSVTVSPEREHVAQAREEGLKDSNDDTN.

3 stretches are compositionally biased toward basic and acidic residues: residues 1–12 (MKMKIQKKEKQL), 100–115 (EPGE…DREP), and 122–171 (EPKE…KRSC). Positions 1-243 (MKMKIQKKEK…KRRSGRQVKR (243 aa)) are disordered. The required for DNA-dependent ATPase activity stretch occupies residues 1 to 746 (MKMKIQKKEK…MMELRKCCNH (746 aa)). Positions 213–224 (QSLPNPSLQSPE) are enriched in low complexity. 2 consecutive Chromo domains span residues 291-342 (NIIE…KDPR) and 374-438 (IEID…KPVE). The Helicase ATP-binding domain occupies 472–646 (LFNWYNRKNC…FSLLNFLEPS (175 aa)). ATP is bound at residue 485 to 492 (DEMGLGKT). A DEAH box motif is present at residues 597–600 (DEAH). The Helicase C-terminal domain maps to 786–955 (LIDKLLPKLI…LSKMEVEDLL (170 aa)). The disordered stretch occupies residues 1318-1370 (SLSAEQGVTDGTSDIPERGNIDKEDSAEDKVDGLQKQTASPSDGSDGIFGEKK). Positions 1320-1329 (SAEQGVTDGT) are enriched in polar residues. Residues 1332 to 1350 (IPERGNIDKEDSAEDKVDG) show a composition bias toward basic and acidic residues. Residues 1435–1489 (RWTRREQADFYRTVSSFGVVYDQEKEAFDWTQFRAISRLDKKSDENLEHYFHSFV) form the Myb-like domain. Residues 1707–1730 (EPRSFQEAPSTNMQSRKKTVTVSA) show a composition bias toward polar residues. The tract at residues 1707–1731 (EPRSFQEAPSTNMQSRKKTVTVSAS) is disordered. At Ser-1852 the chain carries Phosphoserine. Disordered stretches follow at residues 1935–2046 (GLGS…ASGI), 2111–2137 (LPTP…HSFS), 2308–2337 (TTLN…QAEK), 2359–2387 (PGFG…IGSL), 2538–2587 (ASLA…PTIT), and 2626–2698 (QGRH…DDTN). Composition is skewed to basic and acidic residues over residues 1943–1955 (GEKP…DPYR), 1975–1991 (FKLK…ESSE), and 2004–2024 (SEPK…KDGA). Low complexity-rich tracts occupy residues 2117–2127 (SSSAGSRSSLS) and 2315–2336 (PEGP…SQAE). Over residues 2538–2550 (ASLASTKSGASAT) the composition is skewed to low complexity. A compositionally biased stretch (basic and acidic residues) spans 2552–2573 (KTTEDELSGRDVKADSLVEDKP). 2 stretches are compositionally biased toward polar residues: residues 2578–2587 (FSDQSEPTIT) and 2664–2675 (SDQNCTESSVTV). The span at 2677 to 2698 (PEREHVAQAREEGLKDSNDDTN) shows a compositional bias: basic and acidic residues.

Belongs to the SNF2/RAD54 helicase family. In terms of assembly, interacts with NFE2L2; involved in activation of the transcription. May interact with PPARA. In terms of tissue distribution, widely expressed.

Its subcellular location is the nucleus. The protein resides in the nucleoplasm. It catalyses the reaction ATP + H2O = ADP + phosphate + H(+). Its function is as follows. ATP-dependent chromatin-remodeling factor. Regulates transcription by disrupting nucleosomes in a largely non-sliding manner which strongly increases the accessibility of chromatin. Activates transcription of specific genes in response to oxidative stress through interaction with NFE2L2. The protein is Chromodomain-helicase-DNA-binding protein 6 (Chd6) of Rattus norvegicus (Rat).